A 257-amino-acid chain; its full sequence is THAP domain-containing protein 10 (257 aa).

The THAP-type zinc finger occupies 1 to 90 (MPARCVAAHC…LVAGAVPTLH (90 aa)). A compositionally biased stretch (polar residues) spans 154–168 (QPHADNPSNTVTSVP). The interval 154 to 178 (QPHADNPSNTVTSVPTHCEEGPVHK) is disordered.

The protein is THAP domain-containing protein 10 (THAP10) of Homo sapiens (Human).